Reading from the N-terminus, the 101-residue chain is Small ribosomal subunit protein uS14 (101 aa).

The protein belongs to the universal ribosomal protein uS14 family. As to quaternary structure, part of the 30S ribosomal subunit. Contacts proteins S3 and S10.

Binds 16S rRNA, required for the assembly of 30S particles and may also be responsible for determining the conformation of the 16S rRNA at the A site. This is Small ribosomal subunit protein uS14 from Cupriavidus necator (strain ATCC 17699 / DSM 428 / KCTC 22496 / NCIMB 10442 / H16 / Stanier 337) (Ralstonia eutropha).